The following is a 489-amino-acid chain: Glycogen synthase (489 aa).

K15 is an ADP-alpha-D-glucose binding site.

The protein belongs to the glycosyltransferase 1 family. Bacterial/plant glycogen synthase subfamily.

The catalysed reaction is [(1-&gt;4)-alpha-D-glucosyl](n) + ADP-alpha-D-glucose = [(1-&gt;4)-alpha-D-glucosyl](n+1) + ADP + H(+). It participates in glycan biosynthesis; glycogen biosynthesis. In terms of biological role, synthesizes alpha-1,4-glucan chains using ADP-glucose. The protein is Glycogen synthase of Francisella tularensis subsp. mediasiatica (strain FSC147).